Reading from the N-terminus, the 415-residue chain is Gamma-glutamyl phosphate reductase (415 aa).

The protein belongs to the gamma-glutamyl phosphate reductase family.

The protein localises to the cytoplasm. It carries out the reaction L-glutamate 5-semialdehyde + phosphate + NADP(+) = L-glutamyl 5-phosphate + NADPH + H(+). Its pathway is amino-acid biosynthesis; L-proline biosynthesis; L-glutamate 5-semialdehyde from L-glutamate: step 2/2. Its function is as follows. Catalyzes the NADPH-dependent reduction of L-glutamate 5-phosphate into L-glutamate 5-semialdehyde and phosphate. The product spontaneously undergoes cyclization to form 1-pyrroline-5-carboxylate. The protein is Gamma-glutamyl phosphate reductase of Bacillus mycoides (strain KBAB4) (Bacillus weihenstephanensis).